We begin with the raw amino-acid sequence, 270 residues long: Gap junction beta-3 protein (270 aa).

The Cytoplasmic segment spans residues 1–20; the sequence is MDWKTLQALLSGVNKYSTAF. The chain crosses the membrane as a helical span at residues 21-40; the sequence is GRIWLSVVFVFRVLVYVVAA. The Extracellular portion of the chain corresponds to 41-75; sequence ERVWGDEQKDFDCNTKQPGCTNVCYDNYFPISNIR. Residues 76–98 traverse the membrane as a helical segment; the sequence is LWALQLIFVTCPSLLVILHVAYR. Residues 99 to 126 are Cytoplasmic-facing; it reads EERERRHRQKHGDQCAKLYDNAGKKHGG. Residues 127–149 traverse the membrane as a helical segment; that stretch reads LWWTYLFSLIFKLIIEFLFLYLL. At 150–187 the chain is on the extracellular side; it reads HTLWHGFNMPRLVQCANVAPCPNIVDCYIARPTEKKIF. A helical membrane pass occupies residues 188-210; the sequence is TYFMVGASAVCIVLTICELCYLI. Residues 211-270 lie on the Cytoplasmic side of the membrane; sequence CHRVLRGLHKDKPRGGCSPSSSASRASTCRCHHKLVEAGEVDPDPGNNKLQASAPNLTPI. The interval 250–270 is disordered; it reads EVDPDPGNNKLQASAPNLTPI. Positions 258-270 are enriched in polar residues; it reads NKLQASAPNLTPI.

This sequence belongs to the connexin family. Beta-type (group I) subfamily. As to quaternary structure, a connexon is composed of a hexamer of connexins. Interacts with CNST.

It is found in the cell membrane. The protein localises to the cell junction. It localises to the gap junction. Functionally, one gap junction consists of a cluster of closely packed pairs of transmembrane channels, the connexons, through which materials of low MW diffuse from one cell to a neighboring cell. The polypeptide is Gap junction beta-3 protein (GJB3) (Homo sapiens (Human)).